We begin with the raw amino-acid sequence, 50 residues long: Sproutin (50 aa).

At Ser8 the chain carries Phosphoserine; by PKC.

In terms of tissue distribution, brain.

Its function is as follows. Neurite outgrowth factor. The protein is Sproutin of Rattus norvegicus (Rat).